We begin with the raw amino-acid sequence, 849 residues long: DNA mismatch repair protein MutS (849 aa).

602–609 serves as a coordination point for ATP; sequence GPNMSGKS.

It belongs to the DNA mismatch repair MutS family.

This protein is involved in the repair of mismatches in DNA. It is possible that it carries out the mismatch recognition step. This protein has a weak ATPase activity. The chain is DNA mismatch repair protein MutS from Streptococcus mutans serotype c (strain ATCC 700610 / UA159).